The following is an 868-amino-acid chain: Leucine--tRNA ligase (868 aa).

Residues 42-52 (PYPSGKLHMGH) carry the 'HIGH' region motif. Positions 627–631 (KMSKS) match the 'KMSKS' region motif. Residue Lys630 participates in ATP binding.

The protein belongs to the class-I aminoacyl-tRNA synthetase family.

It is found in the cytoplasm. The enzyme catalyses tRNA(Leu) + L-leucine + ATP = L-leucyl-tRNA(Leu) + AMP + diphosphate. This chain is Leucine--tRNA ligase, found in Pseudomonas putida (strain W619).